Consider the following 635-residue polypeptide: MPIQILPPQLANQIAAGEVVERPASVVKELVENSLDAGATRIDIDIERGGAKLIRIRDNGCGISKDDLALALARHATSKISSLEDLEAILSMGFRGEALASISSVSRLILTSRTAEQSEAWQAYAEGRDMAVTIKPAAHPVGSTLEVLDLFYNTPARRKFMRTEKTEFGHIDEVVRRIALARFDVAINLNHNGKLIRQYRAAPDPAQHERRLASICGPAFLQHALAIAWQHGDLNIHGWVADPAASHTLSEMQYCYVNNRMMRDRLINHAIRQAYQDRLNDAQQPAYVLYLDIDPHQVDVNVHPAKHEVRFHQARLVHDFIYQAVTAVLQQTNAPILNISEEGEVDAPRWQQENRVAAGTNKYAQPEAAKSSAAEQAVARERSSARERAAPAYKEDHPYQKQQGELYRQLLQPSAAAKPATSPAAIPASSVSSPSIPVQRITQAEEPLHGDNYSFGRVLTVFPPCYALIEYQGGVALLSLTVAERWLKQAQLSPPEEGLRPQPLLIPLKITLDKNEIAACQNHEKLLITMGIELSVEQGRATLRAVSLPLRQQNLQKLIPELLGYLSQHEEISPDTLATWLARHLGSEHEVWNVSQAIQLLTEVERLCPQLVQSPPAGLLQPIDIKAALATLTHE.

Positions 359 to 399 are disordered; it reads GTNKYAQPEAAKSSAAEQAVARERSSARERAAPAYKEDHPY. The span at 364–377 shows a compositional bias: low complexity; the sequence is AQPEAAKSSAAEQA. Basic and acidic residues predominate over residues 378–399; the sequence is VARERSSARERAAPAYKEDHPY.

The protein belongs to the DNA mismatch repair MutL/HexB family.

Functionally, this protein is involved in the repair of mismatches in DNA. It is required for dam-dependent methyl-directed DNA mismatch repair. May act as a 'molecular matchmaker', a protein that promotes the formation of a stable complex between two or more DNA-binding proteins in an ATP-dependent manner without itself being part of a final effector complex. In Yersinia pseudotuberculosis serotype O:1b (strain IP 31758), this protein is DNA mismatch repair protein MutL.